Here is a 178-residue protein sequence, read N- to C-terminus: Large ribosomal subunit protein uL13m (178 aa).

It belongs to the universal ribosomal protein uL13 family. In terms of assembly, component of the mitochondrial ribosome large subunit (39S) which comprises a 16S rRNA and about 50 distinct proteins. Interacts with OXA1L.

The protein localises to the mitochondrion. This Bos taurus (Bovine) protein is Large ribosomal subunit protein uL13m (MRPL13).